Here is a 328-residue protein sequence, read N- to C-terminus: Reticulocalbin-3 (328 aa).

Positions 1 to 20 (MMWRWTLMLLLLLLRHWALG) are cleaved as a signal peptide. Residues 24-48 (PDAGPHGQDRVHHGTPLSEAPHDDA) are disordered. 6 EF-hand domains span residues 75–112 (ESQA…TQQR), 113–148 (HIRD…HYEP), 163–198 (KMLA…EEFP), 200–235 (MRDI…AEPG), 241–276 (WVQT…PSQD), and 277–312 (QPLV…FVGS). 9 residues coordinate Ca(2+): D92, D94, W96, E101, D126, D128, D130, R132, and E137. N140 carries N-linked (GlcNAc...) asparagine glycosylation. Ca(2+) contacts are provided by D176, D178, D180, M182, E187, D213, N215, D217, Y219, E224, D254, N256, D258, R260, E265, D290, D292, D294, R296, and E301. The Prevents secretion from ER signature appears at 325-328 (HDEL).

Belongs to the CREC family. As to quaternary structure, interacts with PCSK6 (immature form including the propeptide); probably involved in the maturation and the secretion of PCSK6. Post-translationally, N-glycosylated. In terms of processing, degraded by PCSK6 and other endoproteases including FURIN and PCSK5.

It localises to the endoplasmic reticulum lumen. Its function is as follows. Probable molecular chaperone assisting protein biosynthesis and transport in the endoplasmic reticulum. Required for the proper biosynthesis and transport of pulmonary surfactant-associated protein A/SP-A, pulmonary surfactant-associated protein D/SP-D and the lipid transporter ABCA3. By regulating both the proper expression and the degradation through the endoplasmic reticulum-associated protein degradation pathway of these proteins plays a crucial role in pulmonary surfactant homeostasis. Has an anti-fibrotic activity by negatively regulating the secretion of type I and type III collagens. This calcium-binding protein also transiently associates with immature PCSK6 and regulates its secretion. The sequence is that of Reticulocalbin-3 from Rattus norvegicus (Rat).